Reading from the N-terminus, the 364-residue chain is Anthranilate N-methyltransferase (364 aa).

The segment at Met1–Asp20 is disordered. 4 residues coordinate S-adenosyl-L-methionine: Gly209, Asp232, Met253, and Lys266. His270 functions as the Proton acceptor in the catalytic mechanism.

It belongs to the class I-like SAM-binding methyltransferase superfamily. Cation-independent O-methyltransferase family. COMT subfamily. Homodimer. As to expression, expressed in leaves, flowers, stems and roots. Detected in the vascular tissues in stems, in the rhizodermis or the endodermis of roots, in the inside of carpels, in the central vascular bundles of the syncarp ovary and in the secretory oil glands located around the outer ovary wall.

It catalyses the reaction anthranilate + S-adenosyl-L-methionine = N-methylanthranilate + S-adenosyl-L-homocysteine + H(+). Inhibited by Ca(2+), Co(2+), Fe(2+), Fe(3+), Cu(2+) or Zn(2+). No effect of Mg(2+). Involved in the biosynthesis of acridine alkaloids. N-methyltransferase with a strict substrate specificity for anthranilate. No activity with anthranilic acid methyl ester, anthraniloyl CoA, 3- or 4-amino-benzoic acid, salicylic acid, catechol, eugenol, caffeic acid, quercetin, theobromin, theophyllin, putrescine and nicotinic acid among others. In Ruta graveolens (Common rue), this protein is Anthranilate N-methyltransferase.